A 202-amino-acid chain; its full sequence is LexA repressor (202 aa).

The segment at residues 28–47 (IREIGDQFGITAKGAYDHLK) is a DNA-binding region (H-T-H motif). Catalysis depends on for autocatalytic cleavage activity residues Ser-126 and Lys-163.

It belongs to the peptidase S24 family. In terms of assembly, homodimer.

The enzyme catalyses Hydrolysis of Ala-|-Gly bond in repressor LexA.. Its function is as follows. Represses a number of genes involved in the response to DNA damage (SOS response), including recA and lexA. In the presence of single-stranded DNA, RecA interacts with LexA causing an autocatalytic cleavage which disrupts the DNA-binding part of LexA, leading to derepression of the SOS regulon and eventually DNA repair. This Leptospira biflexa serovar Patoc (strain Patoc 1 / Ames) protein is LexA repressor.